The chain runs to 96 residues: Co-chaperonin GroES (96 aa).

Belongs to the GroES chaperonin family. In terms of assembly, heptamer of 7 subunits arranged in a ring. Interacts with the chaperonin GroEL.

The protein resides in the cytoplasm. Its function is as follows. Together with the chaperonin GroEL, plays an essential role in assisting protein folding. The GroEL-GroES system forms a nano-cage that allows encapsulation of the non-native substrate proteins and provides a physical environment optimized to promote and accelerate protein folding. GroES binds to the apical surface of the GroEL ring, thereby capping the opening of the GroEL channel. The sequence is that of Co-chaperonin GroES from Shewanella loihica (strain ATCC BAA-1088 / PV-4).